The primary structure comprises 85 residues: Small ribosomal subunit protein uS17 (85 aa).

Belongs to the universal ribosomal protein uS17 family. In terms of assembly, part of the 30S ribosomal subunit.

Its function is as follows. One of the primary rRNA binding proteins, it binds specifically to the 5'-end of 16S ribosomal RNA. The sequence is that of Small ribosomal subunit protein uS17 from Lachnoclostridium phytofermentans (strain ATCC 700394 / DSM 18823 / ISDg) (Clostridium phytofermentans).